Here is a 345-residue protein sequence, read N- to C-terminus: Golgi-associated RAB2 interactor protein 1B (345 aa).

2 disordered regions span residues 222-241 and 271-299; these read CSPS…SQPS and SRSS…PCTR. Residues 275-285 are compositionally biased toward basic and acidic residues; that stretch reads KKTENKKDSSG.

Belongs to the GARIN family.

It is found in the golgi apparatus. RAB2B effector protein required for accurate acrosome formation and normal male fertility. In complex with RAB2A/RAB2B, seems to suppress excessive vesicle trafficking during acrosome formation. This is Golgi-associated RAB2 interactor protein 1B (GARIN1B) from Bos taurus (Bovine).